A 186-amino-acid polypeptide reads, in one-letter code: Large ribosomal subunit protein uL10 (186 aa).

The protein belongs to the universal ribosomal protein uL10 family. Part of the ribosomal stalk of the 50S ribosomal subunit. The N-terminus interacts with L11 and the large rRNA to form the base of the stalk. The C-terminus forms an elongated spine to which L12 dimers bind in a sequential fashion forming a multimeric L10(L12)X complex.

Its function is as follows. Forms part of the ribosomal stalk, playing a central role in the interaction of the ribosome with GTP-bound translation factors. This Roseiflexus sp. (strain RS-1) protein is Large ribosomal subunit protein uL10.